Here is a 911-residue protein sequence, read N- to C-terminus: Chromatin assembly factor 1 subunit A (911 aa).

The binds PCNA stretch occupies residues 1 to 31; it reads MLEEPEAATRTAAAVDCKDRPGFPVKRLIQA. The tract at residues 166 to 200 is disordered; it reads HMEEEPGSPGDPKRTGDCQAGSLQSCPELTPGSRT. Positions 176 to 327 are binds CBX1 and CBX3 chromo shadow domains; sequence DPKRTGDCQA…LHRDREQQRE (152 aa). Residues 186 to 200 show a composition bias toward polar residues; that stretch reads GSLQSCPELTPGSRT. 2 positions are modified to phosphoserine: Ser-190 and Ser-208. Residues 217 to 230 carry the PxVxL motif motif; the sequence is FIEKVPVVVLEDIL. 2 disordered regions span residues 250 to 408 and 578 to 618; these read SESE…EEEK and DSDD…VPHG. Residues 265 to 281 show a composition bias toward low complexity; that stretch reads LSHSSTNSSSPTSSPEG. Ser-293 carries the phosphoserine modification. Residues 310–408 are compositionally biased toward basic and acidic residues; it reads STEKGRSKLH…EEKRLREEEK (99 aa). Acidic residues-rich tracts occupy residues 578-589 and 597-612; these read DSDDEWEEEEPG and GDEDDDVGEDEDEDDG. The tract at residues 621–657 is necessary for homodimerization and competence for chromatin assembly; the sequence is SEDEGVTEECADPENHKVHQKLKAKEWDELLAKGKRF. Residues 639–911 are binds to p60; it reads HQKLKAKEWD…APIPAPTLCK (273 aa). Ser-776 carries the phosphoserine modification. Disordered stretches follow at residues 819–843 and 866–886; these read PSAPREDSGSASTEGPGQSTPMLLK and GSGDMDGFQADTEEDEEDDTD. Residues 827-839 show a composition bias toward polar residues; it reads GSASTEGPGQSTP. Position 838 is a phosphothreonine (Thr-838). Acidic residues predominate over residues 876 to 886; it reads DTEEDEEDDTD.

It belongs to the CHAF1A family. As to quaternary structure, homodimer. Part of the CAF-1 complex that contains RBBP4, CHAF1B and CHAF1A. CHAF1A binds directly to CHAF1B. Only minor amounts of RBBP4 are complexed with CHAF1A and CHAF1B in G1 phase. Interacts with PCNA; the interaction is direct. Interacts (via the PxVxL motif) with CBX5; the interaction is direct. Interacts with MBD1. Interacts with histones H3.1, H3.2 and H3.1t.

It is found in the nucleus. Its function is as follows. Acts as a component of the histone chaperone complex chromatin assembly factor 1 (CAF-1), which assembles histone octamers onto DNA during replication and repair. CAF-1 performs the first step of the nucleosome assembly process, bringing newly synthesized histones H3 and H4 to replicating DNA; histones H2A/H2B can bind to this chromatin precursor subsequent to DNA replication to complete the histone octamer. It may play a role in heterochromatin maintenance in proliferating cells by bringing newly synthesized cbx proteins to heterochromatic DNA replication foci. The sequence is that of Chromatin assembly factor 1 subunit A from Mus musculus (Mouse).